Consider the following 231-residue polypeptide: 3-oxoadipate CoA-transferase subunit A (231 aa).

Residue Gly25 to Gly31 coordinates CoA.

The protein belongs to the 3-oxoacid CoA-transferase subunit A family. As to quaternary structure, heterodimer.

The enzyme catalyses 3-oxoadipate + succinyl-CoA = 3-oxoadipyl-CoA + succinate. It functions in the pathway aromatic compound metabolism; beta-ketoadipate pathway; acetyl-CoA and succinyl-CoA from 3-oxoadipate: step 1/2. This chain is 3-oxoadipate CoA-transferase subunit A (pcaI), found in Pseudomonas putida (Arthrobacter siderocapsulatus).